The primary structure comprises 514 residues: 1-pyrroline-5-carboxylate dehydrogenase (514 aa).

Active-site residues include Glu-286 and Cys-320.

Belongs to the aldehyde dehydrogenase family. RocA subfamily.

The catalysed reaction is L-glutamate 5-semialdehyde + NAD(+) + H2O = L-glutamate + NADH + 2 H(+). Its pathway is amino-acid degradation; L-proline degradation into L-glutamate; L-glutamate from L-proline: step 2/2. This Staphylococcus haemolyticus (strain JCSC1435) protein is 1-pyrroline-5-carboxylate dehydrogenase.